The primary structure comprises 359 residues: 3-dehydroquinate synthase (359 aa).

NAD(+) contacts are provided by residues 72 to 77 (EGEIHK), 106 to 110 (GVIGD), 130 to 131 (TS), Lys-143, Lys-152, and 170 to 173 (CLKT). 3 residues coordinate Zn(2+): Glu-185, His-248, and His-264.

Belongs to the sugar phosphate cyclases superfamily. Dehydroquinate synthase family. It depends on Co(2+) as a cofactor. Requires Zn(2+) as cofactor. NAD(+) is required as a cofactor.

Its subcellular location is the cytoplasm. It catalyses the reaction 7-phospho-2-dehydro-3-deoxy-D-arabino-heptonate = 3-dehydroquinate + phosphate. The protein operates within metabolic intermediate biosynthesis; chorismate biosynthesis; chorismate from D-erythrose 4-phosphate and phosphoenolpyruvate: step 2/7. Catalyzes the conversion of 3-deoxy-D-arabino-heptulosonate 7-phosphate (DAHP) to dehydroquinate (DHQ). In Dehalococcoides mccartyi (strain ATCC BAA-2266 / KCTC 15142 / 195) (Dehalococcoides ethenogenes (strain 195)), this protein is 3-dehydroquinate synthase.